The primary structure comprises 284 residues: Small ribosomal subunit protein uS5y/uS5u/uS5v (284 aa).

Residues 1–19 (MAERGGESGAERGGDRGDF) are compositionally biased toward basic and acidic residues. Residues 1–51 (MAERGGESGAERGGDRGDFGRGFGGGRGGGRGRDRGPRGRGRRGGRASEET) form a disordered region. Gly residues predominate over residues 20 to 29 (GRGFGGGRGG). In terms of domain architecture, S5 DRBM spans 95 to 158 (LKDEVMKIMP…ILAKLSVVPV (64 aa)).

It belongs to the universal ribosomal protein uS5 family.

The chain is Small ribosomal subunit protein uS5y/uS5u/uS5v (RPS2B) from Arabidopsis thaliana (Mouse-ear cress).